We begin with the raw amino-acid sequence, 355 residues long: Peptide chain release factor 1 (355 aa).

Glutamine 231 bears the N5-methylglutamine mark. Residues 283-292 show a composition bias toward basic and acidic residues; the sequence is LAKETSERKS. A disordered region spans residues 283–306; that stretch reads LAKETSERKSQVGTGDRSGRIRTY.

It belongs to the prokaryotic/mitochondrial release factor family. Methylated by PrmC. Methylation increases the termination efficiency of RF1.

The protein localises to the cytoplasm. Peptide chain release factor 1 directs the termination of translation in response to the peptide chain termination codons UAG and UAA. The polypeptide is Peptide chain release factor 1 (Campylobacter concisus (strain 13826)).